Reading from the N-terminus, the 249-residue chain is DNA polymerase sliding clamp (249 aa).

This sequence belongs to the PCNA family. Homotrimer. The subunits circularize to form a toroid; DNA passes through its center. Replication factor C (RFC) is required to load the toroid on the DNA.

Functionally, sliding clamp subunit that acts as a moving platform for DNA processing. Responsible for tethering the catalytic subunit of DNA polymerase and other proteins to DNA during high-speed replication. The chain is DNA polymerase sliding clamp from Methanococcus vannielii (strain ATCC 35089 / DSM 1224 / JCM 13029 / OCM 148 / SB).